The chain runs to 288 residues: NAD(P)H-hydrate epimerase (288 aa).

The transit peptide at 1–32 (MSGLRALLGLGLLVAGSRLSRVRVQAGSCRAG) directs the protein to the mitochondrion. A Phosphoserine modification is found at S49. Residues 65 to 275 (AQAVDQELFN…ALEKKYQLNL (211 aa)) form the YjeF N-terminal domain. 119 to 123 (NNGGD) contacts (6S)-NADPHX. Residue N120 participates in K(+) binding. N6-succinyllysine is present on K144. D185 provides a ligand contact to K(+). Residues 189 to 195 (GFSFTGE) and D218 each bind (6S)-NADPHX. K(+) is bound at residue S221.

It belongs to the NnrE/AIBP family. In terms of assembly, homodimer. Interacts with APOA1 and APOA2. It depends on K(+) as a cofactor. Undergoes physiological phosphorylation during sperm capacitation, downstream to PKA activation.

It localises to the mitochondrion. Its subcellular location is the secreted. The enzyme catalyses (6R)-NADHX = (6S)-NADHX. It catalyses the reaction (6R)-NADPHX = (6S)-NADPHX. Functionally, catalyzes the epimerization of the S- and R-forms of NAD(P)HX, a damaged form of NAD(P)H that is a result of enzymatic or heat-dependent hydration. This is a prerequisite for the S-specific NAD(P)H-hydrate dehydratase to allow the repair of both epimers of NAD(P)HX. Accelerates cholesterol efflux from endothelial cells to high-density lipoprotein (HDL) and thereby regulates angiogenesis. The chain is NAD(P)H-hydrate epimerase from Bos taurus (Bovine).